We begin with the raw amino-acid sequence, 232 residues long: 7-cyano-7-deazaguanine synthase (232 aa).

Phe8–Leu18 contacts ATP. Residues Cys187, Cys196, Cys199, and Cys202 each contribute to the Zn(2+) site.

This sequence belongs to the QueC family. It depends on Zn(2+) as a cofactor.

It carries out the reaction 7-carboxy-7-deazaguanine + NH4(+) + ATP = 7-cyano-7-deazaguanine + ADP + phosphate + H2O + H(+). Its pathway is purine metabolism; 7-cyano-7-deazaguanine biosynthesis. Catalyzes the ATP-dependent conversion of 7-carboxy-7-deazaguanine (CDG) to 7-cyano-7-deazaguanine (preQ(0)). The polypeptide is 7-cyano-7-deazaguanine synthase (Vibrio campbellii (strain ATCC BAA-1116)).